A 177-amino-acid chain; its full sequence is Endoribonuclease YbeY (177 aa).

3 residues coordinate Zn(2+): His-118, His-122, and His-128.

This sequence belongs to the endoribonuclease YbeY family. Zn(2+) serves as cofactor.

It localises to the cytoplasm. In terms of biological role, single strand-specific metallo-endoribonuclease involved in late-stage 70S ribosome quality control and in maturation of the 3' terminus of the 16S rRNA. This is Endoribonuclease YbeY from Mycobacterium bovis (strain ATCC BAA-935 / AF2122/97).